The primary structure comprises 103 residues: Putative septation protein SpoVG (103 aa).

It belongs to the SpoVG family.

Functionally, could be involved in septation. The chain is Putative septation protein SpoVG from Exiguobacterium sibiricum (strain DSM 17290 / CCUG 55495 / CIP 109462 / JCM 13490 / 255-15).